The following is a 325-amino-acid chain: Protein FAM50B (325 aa).

The residue at position 2 (Ala-2) is an N-acetylalanine. Positions 137-160 (RRAGNLGKNPDVDTSFLPDRDREE) are disordered.

It belongs to the FAM50 family.

The polypeptide is Protein FAM50B (FAM50B) (Macaca fascicularis (Crab-eating macaque)).